Consider the following 382-residue polypeptide: Chorismate synthase (382 aa).

Residues Arg39 and Arg45 each contribute to the NADP(+) site. The interval 89 to 113 (SPEPGGEPRKKALTDARPGHADLTG) is disordered. Positions 94–108 (GEPRKKALTDARPGH) are enriched in basic and acidic residues. FMN is bound by residues 128–130 (RAS), 246–247 (QA), Ala290, 305–309 (KPIAT), and Arg331.

It belongs to the chorismate synthase family. Homotetramer. FMNH2 is required as a cofactor.

It carries out the reaction 5-O-(1-carboxyvinyl)-3-phosphoshikimate = chorismate + phosphate. Its pathway is metabolic intermediate biosynthesis; chorismate biosynthesis; chorismate from D-erythrose 4-phosphate and phosphoenolpyruvate: step 7/7. Catalyzes the anti-1,4-elimination of the C-3 phosphate and the C-6 proR hydrogen from 5-enolpyruvylshikimate-3-phosphate (EPSP) to yield chorismate, which is the branch point compound that serves as the starting substrate for the three terminal pathways of aromatic amino acid biosynthesis. This reaction introduces a second double bond into the aromatic ring system. This is Chorismate synthase from Deinococcus radiodurans (strain ATCC 13939 / DSM 20539 / JCM 16871 / CCUG 27074 / LMG 4051 / NBRC 15346 / NCIMB 9279 / VKM B-1422 / R1).